A 109-amino-acid chain; its full sequence is MKGIFLVVQLGFSIMVFLFLAAVNWYQGSELVSDRFDWNYTAKLSKLLNGIDAVSSPKQISQLDFFIYSAKHYPVMSALMIISFLYVLAALFLLIYSVKCNKQEIHLDC.

An N-terminal signal peptide occupies residues 1–25 (MKGIFLVVQLGFSIMVFLFLAAVNW). Residues 73 to 95 (YPVMSALMIISFLYVLAALFLLI) form a helical membrane-spanning segment.

The protein localises to the membrane. This is an uncharacterized protein from Bacillus subtilis (strain 168).